A 171-amino-acid chain; its full sequence is 3-hydroxydecanoyl-[acyl-carrier-protein] dehydratase (171 aa).

The active site involves H70.

This sequence belongs to the thioester dehydratase family. FabA subfamily. Homodimer.

It localises to the cytoplasm. The catalysed reaction is a (3R)-hydroxyacyl-[ACP] = a (2E)-enoyl-[ACP] + H2O. It carries out the reaction (3R)-hydroxydecanoyl-[ACP] = (2E)-decenoyl-[ACP] + H2O. It catalyses the reaction (2E)-decenoyl-[ACP] = (3Z)-decenoyl-[ACP]. It participates in lipid metabolism; fatty acid biosynthesis. Necessary for the introduction of cis unsaturation into fatty acids. Catalyzes the dehydration of (3R)-3-hydroxydecanoyl-ACP to E-(2)-decenoyl-ACP and then its isomerization to Z-(3)-decenoyl-ACP. Can catalyze the dehydratase reaction for beta-hydroxyacyl-ACPs with saturated chain lengths up to 16:0, being most active on intermediate chain length. In Stutzerimonas stutzeri (strain A1501) (Pseudomonas stutzeri), this protein is 3-hydroxydecanoyl-[acyl-carrier-protein] dehydratase.